A 499-amino-acid polypeptide reads, in one-letter code: Zinc finger protein PLAG1 (499 aa).

The interval 1 to 33 is disordered; the sequence is MATVIPGDLSEVRDTQKAPSGKRKRGESKPRKN. Residues 2–84 form an interaction with KPNA2 region; the sequence is ATVIPGDLSE…SKYKLQRHMA (83 aa). Residues 22-25 carry the Nuclear localization signal motif; sequence KRKR. 7 consecutive C2H2-type zinc fingers follow at residues 34-56, 62-86, 92-114, 121-143, 150-172, 185-207, and 213-236; these read FPCQ…SFSH, YKCT…MATH, HKCN…LHTH, FKCE…LALH, LTCK…LKSH, HQCE…MVVH, and FLCQ…KKSH. Residues 41–242 form a decreased nuclear import with localization in the nucleus but also in the cytoplasm region; it reads KAFNSVEKLK…KKSHNQELLK (202 aa). The segment at 243–383 is repression domain; contains 3 sumoylation motifs and massively decrease transcription activity; sequence VKTEPVDFLD…SPASSSKLGL (141 aa). The interval 243-499 is activates transcription; Inhibition of nuclear import due to lack of NLS and KPNA2 interaction; it reads VKTEPVDFLD…TLPRFHQAFQ (257 aa). Residues lysine 244 and lysine 263 each participate in a glycyl lysine isopeptide (Lys-Gly) (interchain with G-Cter in SUMO) cross-link. Residues 365-379 are compositionally biased toward low complexity; the sequence is GGAPSSSQDSPASSS. The interval 365 to 400 is disordered; that stretch reads GGAPSSSQDSPASSSKLGLEPQSGSPDDGAGDLSLS. The segment at 384–499 is massively activates transcription; the sequence is EPQSGSPDDG…TLPRFHQAFQ (116 aa).

This sequence belongs to the krueppel C2H2-type zinc-finger protein family. As to quaternary structure, interacts with KPNA2, which escorts protein to the nucleus via interaction with nuclear localization signal. Interacts with E3 SUMO-protein ligase PIAS1, PIAS2 and PIAS4. Sumoylated with SUMO1; which inhibits transcriptional activity, but does not affect nuclear localization. Blockers of sumoylation pathway such as SENP3 and inactive UBE2I increases transcriptional capacity. Sumoylation is increased in the presence of PIAS1. In terms of processing, acetylated by lysine acetyltransferase EP300; which activates transcriptional capacity. Lysine residues that are sumoylated also seem to be target for acetylation. Expressed in heart, spleen, lung, kidney, brain, testis and epididymis but not in salivary glands.

It localises to the nucleus. Its function is as follows. Transcription factor whose activation results in up-regulation of target genes, such as IGFII, leading to uncontrolled cell proliferation: when overexpressed in cultured cells, higher proliferation rate and transformation are observed. Other target genes such as CRLF1, CRABP2, CRIP2, PIGF are strongly induced in cells with PLAG1 induction. Proto-oncogene whose ectopic expression can trigger the development of pleomorphic adenomas of the salivary gland and lipoblastomas. Cooperates with CBFB-MYH11. The chain is Zinc finger protein PLAG1 (Plag1) from Mus musculus (Mouse).